The sequence spans 1411 residues: DNA-directed RNA polymerase subunit beta' (1411 aa).

Residues C70, C72, C85, and C88 each contribute to the Zn(2+) site. Mg(2+) is bound by residues D458, D460, and D462. Zn(2+) is bound by residues C813, C887, C894, and C897. The segment at 1384–1411 (AEAAEMATTGSDEAPEVEGSGVESGSAE) is disordered.

This sequence belongs to the RNA polymerase beta' chain family. In terms of assembly, the RNAP catalytic core consists of 2 alpha, 1 beta, 1 beta' and 1 omega subunit. When a sigma factor is associated with the core the holoenzyme is formed, which can initiate transcription. The cofactor is Mg(2+). Zn(2+) serves as cofactor.

It catalyses the reaction RNA(n) + a ribonucleoside 5'-triphosphate = RNA(n+1) + diphosphate. DNA-dependent RNA polymerase catalyzes the transcription of DNA into RNA using the four ribonucleoside triphosphates as substrates. The chain is DNA-directed RNA polymerase subunit beta' from Paracidovorax citrulli (strain AAC00-1) (Acidovorax citrulli).